A 334-amino-acid polypeptide reads, in one-letter code: Aspartate carbamoyltransferase catalytic subunit (334 aa).

Positions 71 and 72 each coordinate carbamoyl phosphate. Lysine 99 is a binding site for L-aspartate. Carbamoyl phosphate-binding residues include arginine 121, histidine 151, and glutamine 154. Residues arginine 184 and arginine 239 each contribute to the L-aspartate site. Carbamoyl phosphate-binding residues include glycine 280 and proline 281.

The protein belongs to the aspartate/ornithine carbamoyltransferase superfamily. ATCase family. As to quaternary structure, heterododecamer (2C3:3R2) of six catalytic PyrB chains organized as two trimers (C3), and six regulatory PyrI chains organized as three dimers (R2).

The enzyme catalyses carbamoyl phosphate + L-aspartate = N-carbamoyl-L-aspartate + phosphate + H(+). The protein operates within pyrimidine metabolism; UMP biosynthesis via de novo pathway; (S)-dihydroorotate from bicarbonate: step 2/3. Functionally, catalyzes the condensation of carbamoyl phosphate and aspartate to form carbamoyl aspartate and inorganic phosphate, the committed step in the de novo pyrimidine nucleotide biosynthesis pathway. This Pseudomonas fluorescens biotype A protein is Aspartate carbamoyltransferase catalytic subunit.